The sequence spans 141 residues: Acetyltransferase YpeA (141 aa).

An N-acetyltransferase domain is found at 1–141 (MEIRVFRQED…GKRLIEDEEY (141 aa)).

It belongs to the acetyltransferase family. YpeA subfamily.

This is Acetyltransferase YpeA from Escherichia coli O157:H7.